The chain runs to 76 residues: CLAVATA3/ESR (CLE)-related protein 46 (76 aa).

An N-terminal signal peptide occupies residues 1–26 (MRRHDIIIKLLLLMCLLLSRFVTREC). The interval 53 to 76 (EEKKWHKHPSGPNPTGNRHPPVKH) is disordered. P61 and P64 each carry hydroxyproline. P64 is a glycosylation site (O-linked (Ara...) hydroxyproline).

The protein belongs to the CLV3/ESR signal peptide family. In terms of processing, the O-glycosylation (arabinosylation) of the hydroxyproline Pro-64 enhances binding affinity of the CLE46p peptide for its receptor.

It is found in the secreted. The protein resides in the extracellular space. Functionally, extracellular signal peptide that regulates cell fate. This Arabidopsis thaliana (Mouse-ear cress) protein is CLAVATA3/ESR (CLE)-related protein 46.